The sequence spans 189 residues: HGPRTase-like protein (189 aa).

Belongs to the purine/pyrimidine phosphoribosyltransferase family. Archaeal HPRT subfamily.

Functionally, may catalyze a purine salvage reaction, the substrate is unknown. The protein is HGPRTase-like protein of Halomicrobium mukohataei (strain ATCC 700874 / DSM 12286 / JCM 9738 / NCIMB 13541) (Haloarcula mukohataei).